Reading from the N-terminus, the 217-residue chain is ATP-dependent Clp protease proteolytic subunit (217 aa).

The active-site Nucleophile is Ser121. His146 is an active-site residue.

It belongs to the peptidase S14 family. As to quaternary structure, fourteen ClpP subunits assemble into 2 heptameric rings which stack back to back to give a disk-like structure with a central cavity, resembling the structure of eukaryotic proteasomes.

It localises to the cytoplasm. The catalysed reaction is Hydrolysis of proteins to small peptides in the presence of ATP and magnesium. alpha-casein is the usual test substrate. In the absence of ATP, only oligopeptides shorter than five residues are hydrolyzed (such as succinyl-Leu-Tyr-|-NHMec, and Leu-Tyr-Leu-|-Tyr-Trp, in which cleavage of the -Tyr-|-Leu- and -Tyr-|-Trp bonds also occurs).. Its function is as follows. Cleaves peptides in various proteins in a process that requires ATP hydrolysis. Has a chymotrypsin-like activity. Plays a major role in the degradation of misfolded proteins. The protein is ATP-dependent Clp protease proteolytic subunit of Burkholderia lata (strain ATCC 17760 / DSM 23089 / LMG 22485 / NCIMB 9086 / R18194 / 383).